Consider the following 527-residue polypeptide: Acyl-coenzyme A thioesterase 4, mitochondrial (527 aa).

The transit peptide at 1 to 75 directs the protein to the mitochondrion; the sequence is MMTPIGIRIR…FLFDPPPIRF (75 aa). HotDog ACOT-type domains are found at residues 172–294 and 370–487; these read ILYN…RDSK and KDTC…GPEA.

Belongs to the acyl coenzyme A hydrolase family. In terms of tissue distribution, mostly expressed at low levels in glandular trichomes (lupulin glands), and, to a lower extent, in stems, leaves, flowers and cones.

It localises to the mitochondrion. It catalyses the reaction 2-methylpropanoyl-CoA + H2O = 2-methylpropanoate + CoA + H(+). The catalysed reaction is propanoyl-CoA + H2O = propanoate + CoA + H(+). It carries out the reaction octanoyl-CoA + H2O = octanoate + CoA + H(+). The enzyme catalyses butanoyl-CoA + H2O = butanoate + CoA + H(+). It catalyses the reaction 3-methylbutanoyl-CoA + H2O = 3-methylbutanoate + CoA + H(+). The catalysed reaction is 2-methylbutanoyl-CoA + H2O = 2-methylbutanoate + CoA + H(+). In terms of biological role, acyl-CoA thioesterases are a group of enzymes that catalyze the hydrolysis of acyl-CoAs to the free fatty acid and coenzyme A (CoASH), providing the potential to regulate intracellular levels of acyl-CoAs, free fatty acids and CoASH. Active on acyl CoAs with short chains (propanoyl-CoA and butanoyl-CoA), branched short chains (2-methylpropanoyl-CoA, 2-methylbutanoyl-CoA and 3-methylbutanoyl-CoA) and medium chains (octanoyl-CoA). This Humulus lupulus (European hop) protein is Acyl-coenzyme A thioesterase 4, mitochondrial.